We begin with the raw amino-acid sequence, 82 residues long: Putative antitoxin VapB23 (82 aa).

Its function is as follows. Putative antitoxin component of a possible type II toxin-antitoxin (TA) system. The cognate toxin is VapC23. The protein is Putative antitoxin VapB23 (vapB23) of Mycobacterium tuberculosis (strain ATCC 25618 / H37Rv).